The chain runs to 614 residues: Phosphomethylpyrimidine synthase (614 aa).

Substrate-binding positions include Asn-226, Met-255, Tyr-284, His-320, Ser-340–Gly-342, Asp-381–Arg-384, and Glu-420. His-424 serves as a coordination point for Zn(2+). Tyr-447 lines the substrate pocket. His-488 serves as a coordination point for Zn(2+). [4Fe-4S] cluster-binding residues include Cys-568, Cys-571, and Cys-576.

This sequence belongs to the ThiC family. In terms of assembly, homodimer. [4Fe-4S] cluster is required as a cofactor.

It catalyses the reaction 5-amino-1-(5-phospho-beta-D-ribosyl)imidazole + S-adenosyl-L-methionine = 4-amino-2-methyl-5-(phosphooxymethyl)pyrimidine + CO + 5'-deoxyadenosine + formate + L-methionine + 3 H(+). Its pathway is cofactor biosynthesis; thiamine diphosphate biosynthesis. Functionally, catalyzes the synthesis of the hydroxymethylpyrimidine phosphate (HMP-P) moiety of thiamine from aminoimidazole ribotide (AIR) in a radical S-adenosyl-L-methionine (SAM)-dependent reaction. In Acidovorax ebreus (strain TPSY) (Diaphorobacter sp. (strain TPSY)), this protein is Phosphomethylpyrimidine synthase.